The sequence spans 203 residues: Urease accessory protein UreG (203 aa).

12–19 (GPVGSGKT) is a GTP binding site.

This sequence belongs to the SIMIBI class G3E GTPase family. UreG subfamily. Homodimer. UreD, UreF and UreG form a complex that acts as a GTP-hydrolysis-dependent molecular chaperone, activating the urease apoprotein by helping to assemble the nickel containing metallocenter of UreC. The UreE protein probably delivers the nickel.

It is found in the cytoplasm. In terms of biological role, facilitates the functional incorporation of the urease nickel metallocenter. This process requires GTP hydrolysis, probably effectuated by UreG. The protein is Urease accessory protein UreG of Alteromonas mediterranea (strain DSM 17117 / CIP 110805 / LMG 28347 / Deep ecotype).